The sequence spans 198 residues: Photosystem I assembly protein Ycf4 (198 aa).

2 helical membrane-spanning segments follow: residues 35-57 (WFYNIVMLLGGIGFLIVGISSYI) and 70-92 (IIFFPQGITMCFYGTCGILFSIN).

Belongs to the Ycf4 family.

The protein resides in the plastid. It localises to the chloroplast thylakoid membrane. In terms of biological role, seems to be required for the assembly of the photosystem I complex. The polypeptide is Photosystem I assembly protein Ycf4 (Euglena gracilis).